A 415-amino-acid polypeptide reads, in one-letter code: Serine hydroxymethyltransferase (415 aa).

Residues L117 and 121–123 contribute to the (6S)-5,6,7,8-tetrahydrofolate site; that span reads GHL. Residue K226 is modified to N6-(pyridoxal phosphate)lysine. Residues E241 and 349-351 contribute to the (6S)-5,6,7,8-tetrahydrofolate site; that span reads SPF.

It belongs to the SHMT family. Homodimer. Pyridoxal 5'-phosphate serves as cofactor.

The protein localises to the cytoplasm. It catalyses the reaction (6R)-5,10-methylene-5,6,7,8-tetrahydrofolate + glycine + H2O = (6S)-5,6,7,8-tetrahydrofolate + L-serine. Its pathway is one-carbon metabolism; tetrahydrofolate interconversion. It functions in the pathway amino-acid biosynthesis; glycine biosynthesis; glycine from L-serine: step 1/1. In terms of biological role, catalyzes the reversible interconversion of serine and glycine with tetrahydrofolate (THF) serving as the one-carbon carrier. This reaction serves as the major source of one-carbon groups required for the biosynthesis of purines, thymidylate, methionine, and other important biomolecules. Also exhibits THF-independent aldolase activity toward beta-hydroxyamino acids, producing glycine and aldehydes, via a retro-aldol mechanism. The protein is Serine hydroxymethyltransferase of Geobacter metallireducens (strain ATCC 53774 / DSM 7210 / GS-15).